Reading from the N-terminus, the 204-residue chain is Guanylate kinase (204 aa).

Positions 4-182 constitute a Guanylate kinase-like domain; sequence GMLVVVSGPS…AVNDLEAVLT (179 aa). 11–18 lines the ATP pocket; it reads GPSGAGKG.

It belongs to the guanylate kinase family.

It is found in the cytoplasm. It catalyses the reaction GMP + ATP = GDP + ADP. Its function is as follows. Essential for recycling GMP and indirectly, cGMP. The chain is Guanylate kinase from Carboxydothermus hydrogenoformans (strain ATCC BAA-161 / DSM 6008 / Z-2901).